The sequence spans 386 residues: Aspergillopepsin-1 (386 aa).

A signal peptide spans 1–20 (MVVFSKVAAAAFGLSAVASA). A propeptide spans 21–69 (MPAAPPRQGFTINQLTRAIPKRTINLPAIYANALSKYGGNVPPHIQDAM) (activation peptide). The 299-residue stretch at 85–383 (YLTPVAVGGT…DSEGPQLGFA (299 aa)) folds into the Peptidase A1 domain. Asp101 is an active-site residue. A glycan (N-linked (GlcNAc...) asparagine) is linked at Asn130. Asp275 is a catalytic residue. A disulfide bridge connects residues Cys311 and Cys346.

Belongs to the peptidase A1 family. In terms of assembly, monomer.

Its subcellular location is the secreted. It catalyses the reaction Hydrolysis of proteins with broad specificity. Generally favors hydrophobic residues in P1 and P1', but also accepts Lys in P1, which leads to activation of trypsinogen. Does not clot milk.. Its function is as follows. Secreted aspartic endopeptidase that allows assimilation of proteinaceous substrates. The scissile peptide bond is attacked by a nucleophilic water molecule activated by two aspartic residues in the active site. Shows a broad primary substrate specificity. Favors hydrophobic residues at the P1 and P1' positions, but also accepts a lysine residue in the P1 position, leading to the activation of trypsinogen and chymotrypsinogen A. In Emericella nidulans (strain FGSC A4 / ATCC 38163 / CBS 112.46 / NRRL 194 / M139) (Aspergillus nidulans), this protein is Aspergillopepsin-1.